The primary structure comprises 285 residues: Nucleotide-binding protein Avin_12760 (285 aa).

8 to 15 contributes to the ATP binding site; it reads GRSGSGKS. 60 to 63 is a binding site for GTP; sequence DARN.

The protein belongs to the RapZ-like family.

Displays ATPase and GTPase activities. The protein is Nucleotide-binding protein Avin_12760 of Azotobacter vinelandii (strain DJ / ATCC BAA-1303).